We begin with the raw amino-acid sequence, 360 residues long: Mannose-1-phosphate guanylyltransferase catalytic subunit beta (360 aa).

The interval 2-222 (KALILVGGYG…QGFWMDIGQP (221 aa)) is substrate-binding domain. Aspartate 110 is a GDP-alpha-D-mannose binding site. Position 110 (aspartate 110) interacts with Mg(2+). Lysine 162 is a catalytic residue. Aspartate 218 is a GDP-alpha-D-mannose binding site. Aspartate 218 contacts Mg(2+). Residues 245–360 (CSGPGIVGNV…ESVPEPGIIM (116 aa)) form a hexapeptide repeat domain region.

The protein belongs to the transferase hexapeptide repeat family. Component of the GMPPA-GMPPB mannose-1-phosphate guanylyltransferase complex composed of 4 GMPPA subunits and 8 GMPPB subunits; the complex is organized into three layers, a central layer made up of 2 GMPPA dimers sandwiched between two layers each made up of 2 GMPPB dimers. GMPPB catalytic activity is reduced when part of the complex and binding of GDP-alpha-D-Mannose by GMPPA induces allosteric feedback inhibition of GMPPB. The cofactor is Mg(2+). As to expression, expressed in the liver (at protein level).

It localises to the cytoplasm. It carries out the reaction alpha-D-mannose 1-phosphate + GTP + H(+) = GDP-alpha-D-mannose + diphosphate. It functions in the pathway nucleotide-sugar biosynthesis; GDP-alpha-D-mannose biosynthesis; GDP-alpha-D-mannose from alpha-D-mannose 1-phosphate (GTP route): step 1/1. With respect to regulation, enzyme activity is reduced by incorporation into the GMPPA-GMPPB mannose-1-phosphate guanylyltransferase complex. Allosterically inhibited, when part of the GMPPA-GMPPB complex, by GDP-alpha-D-mannose binding to GMPPA. In terms of biological role, catalytic subunit of the GMPPA-GMPPB mannose-1-phosphate guanylyltransferase complex. Catalyzes the formation of GDP-mannose, an essential precursor of glycan moieties of glycoproteins and glycolipids. Can catalyze the reverse reaction in vitro. Together with GMPPA regulates GDP-alpha-D-mannose levels. The protein is Mannose-1-phosphate guanylyltransferase catalytic subunit beta of Sus scrofa (Pig).